Consider the following 362-residue polypeptide: Class I histocompatibility antigen, Gogo-OKO alpha chain (362 aa).

The signal sequence occupies residues 1–24; sequence MAVVAPRTLLLLLSGTLALTRTWA. Residues 25–114 form an alpha-1 region; the sequence is GSHSMRYFYT…LRGYYNQSEG (90 aa). Residues 25 to 308 lie on the Extracellular side of the membrane; it reads GSHSMRYFYT…EPSSQPTIPI (284 aa). N-linked (GlcNAc...) asparagine glycosylation occurs at N110. Residues 115–206 form an alpha-2 region; the sequence is GSHTIQRMYG…ENGKETLQRT (92 aa). 2 disulfides stabilise this stretch: C125-C188 and C227-C283. Residues 207-298 are alpha-3; the sequence is DPPKTHMTHH…GLPKPLTLRW (92 aa). One can recognise an Ig-like C1-type domain in the interval 209-295; it reads PKTHMTHHPV…QHEGLPKPLT (87 aa). Positions 299-308 are connecting peptide; sequence EPSSQPTIPI. A helical transmembrane segment spans residues 309-332; sequence VGIIAGLVLLGAVITGAVVAAMMW. Over 333 to 362 the chain is Cytoplasmic; that stretch reads RKKSSGRKGGSYSQAASSDSAQGSDVSLTA. The tract at residues 337–362 is disordered; sequence SGRKGGSYSQAASSDSAQGSDVSLTA. The segment covering 342–362 has biased composition (low complexity); the sequence is GSYSQAASSDSAQGSDVSLTA.

Belongs to the MHC class I family. As to quaternary structure, heterodimer of an alpha chain and a beta chain (beta-2-microglobulin).

The protein resides in the membrane. Its function is as follows. Involved in the presentation of foreign antigens to the immune system. The protein is Class I histocompatibility antigen, Gogo-OKO alpha chain of Gorilla gorilla gorilla (Western lowland gorilla).